A 64-amino-acid chain; its full sequence is Conotoxin Ts-011 (64 aa).

The first 22 residues, 1–22 (MHCLPVLVILLLLIASTPSVDA), serve as a signal peptide directing secretion. The propeptide occupies 23–52 (RPKTKDDVPPASFHGADDANRILQTLWNLR). Ile-63 carries the isoleucine amide modification.

The protein belongs to the conotoxin T superfamily. Post-translationally, contains 2 disulfide bonds that can be either 'C1-C3, C2-C4' or 'C1-C4, C2-C3', since these disulfide connectivities have been observed for conotoxins with cysteine framework V (for examples, see AC P0DQQ7 and AC P81755). In terms of tissue distribution, expressed by the venom duct.

It is found in the secreted. This chain is Conotoxin Ts-011, found in Conus tessulatus (Tessellate cone).